A 274-amino-acid chain; its full sequence is 2,3,4,5-tetrahydropyridine-2,6-dicarboxylate N-succinyltransferase (274 aa).

Substrate is bound by residues arginine 105 and aspartate 142.

This sequence belongs to the transferase hexapeptide repeat family. As to quaternary structure, homotrimer.

The protein localises to the cytoplasm. The enzyme catalyses (S)-2,3,4,5-tetrahydrodipicolinate + succinyl-CoA + H2O = (S)-2-succinylamino-6-oxoheptanedioate + CoA. Its pathway is amino-acid biosynthesis; L-lysine biosynthesis via DAP pathway; LL-2,6-diaminopimelate from (S)-tetrahydrodipicolinate (succinylase route): step 1/3. This is 2,3,4,5-tetrahydropyridine-2,6-dicarboxylate N-succinyltransferase from Methylobacillus flagellatus (strain ATCC 51484 / DSM 6875 / VKM B-1610 / KT).